We begin with the raw amino-acid sequence, 387 residues long: Early growth response protein 3 (387 aa).

The disordered stretch occupies residues 241–283 (PGFGSLPQPPLTLKPIRPRKYPNRPSKTPLHERPHACPAEGCD). Over residues 269 to 283 (PLHERPHACPAEGCD) the composition is skewed to basic and acidic residues. C2H2-type zinc fingers lie at residues 275–299 (HACPAEGCDRRFSRSDELTRHLRIH), 305–327 (FQCRICMRSFSRSDHLTTHIRTH), and 333–355 (FACEFCGRKFARSDERKRHAKIH). The disordered stretch occupies residues 348 to 387 (RKRHAKIHLKQKEKKSEKGGAPSASSAPTVSLAPVVTTCA). The segment covering 350–360 (RHAKIHLKQKE) has biased composition (basic residues).

Belongs to the EGR C2H2-type zinc-finger protein family.

The protein resides in the nucleus. Functionally, probable transcription factor involved in muscle spindle development. The protein is Early growth response protein 3 (Egr3) of Mus musculus (Mouse).